The sequence spans 296 residues: tRNA dimethylallyltransferase (296 aa).

11–18 (GPTAVGKT) is a binding site for ATP. Position 13 to 18 (13 to 18 (TAVGKT)) interacts with substrate. Positions 36–39 (DSQQ) are interaction with substrate tRNA.

Belongs to the IPP transferase family. In terms of assembly, monomer. Requires Mg(2+) as cofactor.

The catalysed reaction is adenosine(37) in tRNA + dimethylallyl diphosphate = N(6)-dimethylallyladenosine(37) in tRNA + diphosphate. Functionally, catalyzes the transfer of a dimethylallyl group onto the adenine at position 37 in tRNAs that read codons beginning with uridine, leading to the formation of N6-(dimethylallyl)adenosine (i(6)A). This is tRNA dimethylallyltransferase from Streptococcus equi subsp. equi (strain 4047).